Here is a 251-residue protein sequence, read N- to C-terminus: MTTSRCSHLPEVLPDCTSSAPSGKTVEDCSSLVNGQPQYVMQVSAKDGQLLSTVVRTLTTQSFNDRPMCRICHEGSTQEDLLSPCECTGTLGTIHRSCLEHWLSSSNTSYCELCHFRFSVERKPRPLVEWLRNPGPQHEKRTLFGDMVCFLFITPLATISGWLCLRGAVDHLHFSSRLEAVGLIALTVALFTIYLFWTLVSFRYHCRLYNEWRRTNQRVILVIPKSANLPSAQQSLLGLHSFKRNSKETIV.

The RING-CH-type zinc finger occupies 61-121 (QSFNDRPMCR…ELCHFRFSVE (61 aa)). 8 residues coordinate Zn(2+): C69, C72, C85, C87, H95, C98, C111, and C114. A run of 2 helical transmembrane segments spans residues 143-163 (LFGD…SGWL) and 180-200 (AVGL…WTLV).

The protein resides in the cytoplasmic vesicle membrane. It is found in the early endosome membrane. The catalysed reaction is S-ubiquitinyl-[E2 ubiquitin-conjugating enzyme]-L-cysteine + [acceptor protein]-L-lysine = [E2 ubiquitin-conjugating enzyme]-L-cysteine + N(6)-ubiquitinyl-[acceptor protein]-L-lysine.. Its pathway is protein modification; protein ubiquitination. In terms of biological role, E3 ubiquitin-protein ligase which may be involved in endosomal trafficking. E3 ubiquitin ligases accept ubiquitin from an E2 ubiquitin-conjugating enzyme in the form of a thioester and then directly transfer the ubiquitin to targeted substrates. This Xenopus tropicalis (Western clawed frog) protein is E3 ubiquitin-protein ligase MARCHF3 (marchf3).